We begin with the raw amino-acid sequence, 393 residues long: Formate-dependent phosphoribosylglycinamide formyltransferase (393 aa).

Residues 22–23 (EL) and E82 contribute to the N(1)-(5-phospho-beta-D-ribosyl)glycinamide site. Residues R114, K155, 160–165 (SSGKGQ), 195–198 (EGFV), and E203 each bind ATP. The 190-residue stretch at 119-308 (RLAAEELGLP…EFALHARAIL (190 aa)) folds into the ATP-grasp domain. Positions 267 and 279 each coordinate Mg(2+). N(1)-(5-phospho-beta-D-ribosyl)glycinamide contacts are provided by residues D286, K356, and 363-364 (RR).

Belongs to the PurK/PurT family. As to quaternary structure, homodimer.

The catalysed reaction is N(1)-(5-phospho-beta-D-ribosyl)glycinamide + formate + ATP = N(2)-formyl-N(1)-(5-phospho-beta-D-ribosyl)glycinamide + ADP + phosphate + H(+). The protein operates within purine metabolism; IMP biosynthesis via de novo pathway; N(2)-formyl-N(1)-(5-phospho-D-ribosyl)glycinamide from N(1)-(5-phospho-D-ribosyl)glycinamide (formate route): step 1/1. Functionally, involved in the de novo purine biosynthesis. Catalyzes the transfer of formate to 5-phospho-ribosyl-glycinamide (GAR), producing 5-phospho-ribosyl-N-formylglycinamide (FGAR). Formate is provided by PurU via hydrolysis of 10-formyl-tetrahydrofolate. The sequence is that of Formate-dependent phosphoribosylglycinamide formyltransferase from Nitratidesulfovibrio vulgaris (strain DSM 19637 / Miyazaki F) (Desulfovibrio vulgaris).